We begin with the raw amino-acid sequence, 273 residues long: Large ribosomal subunit protein uL2 (273 aa).

Disordered regions lie at residues 34-54 and 223-273; these read LEKK…TRHI and VAMN…RRRK.

Belongs to the universal ribosomal protein uL2 family. As to quaternary structure, part of the 50S ribosomal subunit. Forms a bridge to the 30S subunit in the 70S ribosome.

In terms of biological role, one of the primary rRNA binding proteins. Required for association of the 30S and 50S subunits to form the 70S ribosome, for tRNA binding and peptide bond formation. It has been suggested to have peptidyltransferase activity; this is somewhat controversial. Makes several contacts with the 16S rRNA in the 70S ribosome. This Pseudomonas aeruginosa (strain LESB58) protein is Large ribosomal subunit protein uL2.